The primary structure comprises 85 residues: Prosialokinin (85 aa).

Residues 1-23 (MNMFITVQIVIVLVLAVLSEAAS) form the signal peptide. The propeptide occupies 24-74 (LPTATERKDAMDEGPNQSDEPEGSVADPSTKDDDYSDSLKQDEKYYKVRLL). Positions 26-61 (TATERKDAMDEGPNQSDEPEGSVADPSTKDDDYSDS) are disordered. Residues 52–61 (STKDDDYSDS) are compositionally biased toward basic and acidic residues. Met-84 carries the methionine amide modification.

The protein belongs to the tachykinin family. As to expression, expressed exclusively in the medial lobe of female salivary gland. Not detected in female carcass without head and salivary glands. Not detected in male tissues.

The protein resides in the secreted. Vasodilatory peptide. Facilitates mosquito blood feeding on vertebrate host. Induces nitric oxide (NO) release in blood vessels through the activation of the nitric oxide synthase (NOS3). Enhances endothelial permeability and induces edema at the site of inoculation in the host. Induces host smooth muscle contraction. Down-regulates production of Th1 cytokines, such as IL2 and IFN-gamma (IFNG), in mouse splenocytes. Up-regulates production of Th2 cytokines, such as IL4 and IL10, in mouse splenocytes. Promotes recruitment of host leukocytes, especially neutrophils and CD8+ T cells, to the bite site. Modulates cytokine production by host macrophages. Modulates populations of monocytes/macrophages, plasmacytoid dendritic cells, B cells, CD4+ T cells, NK and NKT cells, shifting mammalian immunity towards Th2 responses. Functionally, (Microbial infection) Promotes Semliki Forest virus infection in the host. In terms of biological role, (Microbial infection) Does not affect Zika virus replication in the host. The chain is Prosialokinin from Aedes aegypti (Yellowfever mosquito).